A 124-amino-acid polypeptide reads, in one-letter code: MaFF-interacting protein (124 aa).

Positions 54–96 (LVSEVEELYKSITALREKLLQAEQSLRNLKDIHMSLEKDVTAM) form a coiled coil.

It belongs to the tektin family. As to quaternary structure, interacts with MIS18A. Interacts (via its coiled-coil region) with MAFF. Strongly expressed in brain, kidney and ovary. Moderately expressed in liver, spleen, thymus, prostate, testis, small intestine and colon. Weakly expressed in heart, placenta, lung and leukocytes.

It is found in the cytoplasm. The protein localises to the nucleus. It localises to the nucleolus. In terms of biological role, acts as a coactivator of MAFF transcriptional activity. Inhibits cell growth and colony-forming efficiency. The polypeptide is MaFF-interacting protein (MAFIP) (Homo sapiens (Human)).